The primary structure comprises 316 residues: Peroxisomal targeting signal 2 receptor (316 aa).

6 WD repeats span residues 56–96, 102–142, 145–185, 188–228, 232–272, and 277–316; these read DTRD…GGRP, EHTK…SLKT, EHRY…SLNT, AHDH…RPTT, GHTY…DPII, and HHTEFVVGLDWNMFIDGQMASCSWDEQVCVWNLGRPGQFR.

It belongs to the WD repeat peroxin-7 family. As to quaternary structure, interacts with PEX5; interaction only takes place when PEX7 is associated with cargo proteins.

The protein localises to the cytoplasm. It is found in the cytosol. It localises to the peroxisome matrix. In terms of biological role, receptor required for the peroxisomal import of proteins containing a C-terminal PTS2-type peroxisomal targeting signal. Specifically binds to cargo proteins containing a PTS2 peroxisomal targeting signal in the cytosol. Cargo protein-binding triggers interaction with PEX5 and formation of a ternary complex composed of PEX5 and PEX7 along with PTS2-containing cargo proteins, which is tranlocated into peroxisomes by passing through the PEX13-PEX14 docking complex. This chain is Peroxisomal targeting signal 2 receptor (pex7), found in Dictyostelium discoideum (Social amoeba).